The primary structure comprises 818 residues: Protein LDB19 (818 aa).

Residues 1–25 are disordered; it reads MAFSRLTSTHQSNHNGYSNSNKKGQ. Position 93 is a phosphothreonine (threonine 93). The span at 352 to 361 shows a compositional bias: basic and acidic residues; that stretch reads QVKIKESEKS. The tract at residues 352-374 is disordered; sequence QVKIKESEKSKKPRSHIKRYGEL. At serine 384 the chain carries Phosphoserine. The disordered stretch occupies residues 388–436; that stretch reads MPSQRLPGEPGREQAPNSSGPASTGNVGLDDENPVNEDEEDQPGSEFIH. Polar residues predominate over residues 402–413; the sequence is APNSSGPASTGN. Residues 416-430 are compositionally biased toward acidic residues; the sequence is LDDENPVNEDEEDQP. A Glycyl lysine isopeptide (Lys-Gly) (interchain with G-Cter in ubiquitin) cross-link involves residue lysine 486. 2 disordered regions span residues 568–590 and 607–644; these read QPIR…NVHN and TPKV…NSNI. Threonine 619 bears the Phosphothreonine mark. A compositionally biased stretch (polar residues) spans 620–629; the sequence is PVNSNKSNHS. Phosphoserine is present on serine 808.

It belongs to the LDB19 family.

It is found in the cytoplasm. It localises to the golgi apparatus. Its function is as follows. May be involved in protein-linked oligosaccharide phosphorylation since the deletion reduces the negative charge of the cell surface. Involved in the resistance to EDTA, cadmium chloride, cycloheximide, 6-dimethylaminopurine, methyl caffeate, beta-chloro-L-alanine, caffeine and cerulenin. The polypeptide is Protein LDB19 (LDB19) (Saccharomyces cerevisiae (strain ATCC 204508 / S288c) (Baker's yeast)).